We begin with the raw amino-acid sequence, 428 residues long: Gamma-glutamyl phosphate reductase (428 aa).

Belongs to the gamma-glutamyl phosphate reductase family.

The protein resides in the cytoplasm. The catalysed reaction is L-glutamate 5-semialdehyde + phosphate + NADP(+) = L-glutamyl 5-phosphate + NADPH + H(+). It participates in amino-acid biosynthesis; L-proline biosynthesis; L-glutamate 5-semialdehyde from L-glutamate: step 2/2. Catalyzes the NADPH-dependent reduction of L-glutamate 5-phosphate into L-glutamate 5-semialdehyde and phosphate. The product spontaneously undergoes cyclization to form 1-pyrroline-5-carboxylate. The polypeptide is Gamma-glutamyl phosphate reductase (Agrobacterium fabrum (strain C58 / ATCC 33970) (Agrobacterium tumefaciens (strain C58))).